A 431-amino-acid polypeptide reads, in one-letter code: Ubiquitin-like modifier-activating enzyme 5 (431 aa).

Residues glycine 92, aspartate 113, lysine 136, asparagine 159, and asparagine 197 each contribute to the ATP site. Residues cysteine 239 and cysteine 242 each contribute to the Zn(2+) site. Cysteine 263 serves as the catalytic Glycyl thioester intermediate. The Zn(2+) site is built by cysteine 316 and cysteine 321. Positions 339 to 396 are disordered; the sequence is AKAKMEADASTTIDEGPLHDDNEWNISVVDDENEKDTTKAASSSDTLPEGLTRELPVA.

Belongs to the ubiquitin-activating E1 family. UBA5 subfamily.

Its function is as follows. E1-like enzyme which activates UFM1. The sequence is that of Ubiquitin-like modifier-activating enzyme 5 from Arabidopsis thaliana (Mouse-ear cress).